Here is a 679-residue protein sequence, read N- to C-terminus: MSEARQILVTSALPYANGSIHLGHMLEYIQTDMWVRFQKLRGNQCIYVCADDAHGSAIMLRAEKEGITPEQLIANVQAEHSADFADFLVNFDNFHSTHSPENRELAELIYTRLRDAGHIATRSVTQYFDPEKGMFLADRFIKGTCPRCAAEDQYGDNCEKCGATYEPTELKDPRSAISGATPVLKDSKHFFFKLPDFEAMLKEWTRGGALQESVANKIAEWLDGGLQEWDISRDAPYFGFEIPGEPGKYFYVWLDAPIGYMASFQNLCKRRPELSFDAFWSKESSAELYHFIGKDIINFHTLFWPAMLEGAGFRKPTAVNVHGYLTVNGQKMSKSRGTFIKARTYLDHLNPEYLRYYYASKLGRGVDDLDLNLDDFVQKVNSDLVGKVVNIASRCAGFIHKGNDGVMVEANPEPELWAAFQAAAPSIADAYEARDFARAMREIMALADRANAWIADKAPWALNKVEGKQAEVQEICALGVNLFRQLVIFLKPVLPNLAAAAEQFLNVAPLSWDDHATLLANHKLNAFTPLMTRIEPAKIDAMIEASKEDLAASEAAVPAGNGELAKAPLAAEINFDTFAAVDLRIALIEKAEFVEGADKLLRLTLNIGDATRNVFSGIKSAYPDPSKLEGRLTLYVANLAPRKMKFGMSEGMVLAAGPGGSEIYLLSPDNGAKPGQRVM.

A 'HIGH' region motif is present at residues Pro14 to His24. Residues Cys145, Cys148, Cys158, and Cys161 each coordinate Zn(2+). A 'KMSKS' region motif is present at residues Lys331–Ser335. Lys334 is an ATP binding site. Residues Thr577–Met679 enclose the tRNA-binding domain.

It belongs to the class-I aminoacyl-tRNA synthetase family. MetG type 1 subfamily. As to quaternary structure, homodimer. The cofactor is Zn(2+).

The protein resides in the cytoplasm. It carries out the reaction tRNA(Met) + L-methionine + ATP = L-methionyl-tRNA(Met) + AMP + diphosphate. Is required not only for elongation of protein synthesis but also for the initiation of all mRNA translation through initiator tRNA(fMet) aminoacylation. The protein is Methionine--tRNA ligase of Stutzerimonas stutzeri (strain A1501) (Pseudomonas stutzeri).